The following is a 446-amino-acid chain: Palmitoyltransferase PFA4 (446 aa).

Topologically, residues 1–8 are cytoplasmic; the sequence is MAVQLKWP. Residues 9–29 traverse the membrane as a helical segment; the sequence is ILGVIIPCIIIFSLSYGSHYF. Residues 30–40 are Lumenal-facing; it reads ILRHHLTMKQQ. A helical membrane pass occupies residues 41-61; it reads LIYEFYVTMIWISYLLAIYTN. The Cytoplasmic portion of the chain corresponds to 62-161; that stretch reads PGRVPKNYKP…GNNNLPHFMR (100 aa). The region spanning 114–164 is the DHHC domain; the sequence is RYCKKCNNYKPPRSHHCKICQQCVLQMDHHCPWTLNCVGNNNLPHFMRFLG. Cys144 serves as the catalytic S-palmitoyl cysteine intermediate. A helical membrane pass occupies residues 162-182; it reads FLGWIIWGTGYLMIQLIKLII. Topologically, residues 183–201 are lumenal; the sequence is NYYENSNMPHYLFNKTELV. A helical transmembrane segment spans residues 202 to 222; sequence AIIAITPLNFFVFASILVLFI. The Cytoplasmic portion of the chain corresponds to 223 to 446; sequence RCLINICKGM…TDFGVDEDSD (224 aa).

The protein belongs to the DHHC palmitoyltransferase family. PFA4 subfamily.

The protein localises to the endoplasmic reticulum membrane. The enzyme catalyses L-cysteinyl-[protein] + hexadecanoyl-CoA = S-hexadecanoyl-L-cysteinyl-[protein] + CoA. Mediates the reversible addition of palmitate to target proteins, thereby regulating their membrane association and biological function. In Candida albicans (strain SC5314 / ATCC MYA-2876) (Yeast), this protein is Palmitoyltransferase PFA4.